Here is a 204-residue protein sequence, read N- to C-terminus: Holliday junction branch migration complex subunit RuvA (204 aa).

The segment at 1-64 (MIGRLQGILL…EDAHLLFGFS (64 aa)) is domain I. The segment at 65 to 143 (AKTDRTLFRE…GIKQPDFFVE (79 aa)) is domain II. The interval 144 to 155 (SSHVGAVDPVTT) is flexible linker. Residues 156 to 204 (SPEVPAEEAVAALMALGYKASDAEKMVKRIAKPHLTSEQLIREALKAAL) are domain III.

Belongs to the RuvA family. In terms of assembly, homotetramer. Forms an RuvA(8)-RuvB(12)-Holliday junction (HJ) complex. HJ DNA is sandwiched between 2 RuvA tetramers; dsDNA enters through RuvA and exits via RuvB. An RuvB hexamer assembles on each DNA strand where it exits the tetramer. Each RuvB hexamer is contacted by two RuvA subunits (via domain III) on 2 adjacent RuvB subunits; this complex drives branch migration. In the full resolvosome a probable DNA-RuvA(4)-RuvB(12)-RuvC(2) complex forms which resolves the HJ.

The protein localises to the cytoplasm. Functionally, the RuvA-RuvB-RuvC complex processes Holliday junction (HJ) DNA during genetic recombination and DNA repair, while the RuvA-RuvB complex plays an important role in the rescue of blocked DNA replication forks via replication fork reversal (RFR). RuvA specifically binds to HJ cruciform DNA, conferring on it an open structure. The RuvB hexamer acts as an ATP-dependent pump, pulling dsDNA into and through the RuvAB complex. HJ branch migration allows RuvC to scan DNA until it finds its consensus sequence, where it cleaves and resolves the cruciform DNA. The chain is Holliday junction branch migration complex subunit RuvA from Mannheimia succiniciproducens (strain KCTC 0769BP / MBEL55E).